The sequence spans 122 residues: Large ribosomal subunit protein uL14 (122 aa).

Belongs to the universal ribosomal protein uL14 family. In terms of assembly, part of the 50S ribosomal subunit. Forms a cluster with proteins L3 and L19. In the 70S ribosome, L14 and L19 interact and together make contacts with the 16S rRNA in bridges B5 and B8.

Binds to 23S rRNA. Forms part of two intersubunit bridges in the 70S ribosome. The chain is Large ribosomal subunit protein uL14 from Corynebacterium kroppenstedtii (strain DSM 44385 / JCM 11950 / CIP 105744 / CCUG 35717).